We begin with the raw amino-acid sequence, 200 residues long: UPF0316 protein SACOL1973 (200 aa).

3 helical membrane-spanning segments follow: residues 8 to 28 (PWLM…FLTM), 40 to 60 (IAAS…GLVM), and 66 to 86 (IQNI…GMKI).

It belongs to the UPF0316 family.

It is found in the cell membrane. In Staphylococcus aureus (strain COL), this protein is UPF0316 protein SACOL1973.